Here is a 189-residue protein sequence, read N- to C-terminus: Movement protein p22 (189 aa).

This sequence belongs to the tombusvirus/aureusvirus movement protein p22 family. As to quaternary structure, interacts with host protein HFI22. In terms of processing, phosphorylated.

It localises to the host membrane. In terms of biological role, cell-to-cell movement. Displays RNA-binding activity. In Capsicum annuum (Capsicum pepper), this protein is Movement protein p22.